A 213-amino-acid chain; its full sequence is N-(5'-phosphoribosyl)anthranilate isomerase (213 aa).

It belongs to the TrpF family.

The enzyme catalyses N-(5-phospho-beta-D-ribosyl)anthranilate = 1-(2-carboxyphenylamino)-1-deoxy-D-ribulose 5-phosphate. Its pathway is amino-acid biosynthesis; L-tryptophan biosynthesis; L-tryptophan from chorismate: step 3/5. This is N-(5'-phosphoribosyl)anthranilate isomerase from Leptospira interrogans serogroup Icterohaemorrhagiae serovar copenhageni (strain Fiocruz L1-130).